The following is a 131-amino-acid chain: Small ribosomal subunit protein uS11 (131 aa).

The protein belongs to the universal ribosomal protein uS11 family. As to quaternary structure, part of the 30S ribosomal subunit. Interacts with proteins S7 and S18. Binds to IF-3.

Located on the platform of the 30S subunit, it bridges several disparate RNA helices of the 16S rRNA. Forms part of the Shine-Dalgarno cleft in the 70S ribosome. The sequence is that of Small ribosomal subunit protein uS11 from Thermotoga neapolitana (strain ATCC 49049 / DSM 4359 / NBRC 107923 / NS-E).